A 474-amino-acid chain; its full sequence is 3-isopropylmalate dehydratase large subunit (474 aa).

3 residues coordinate [4Fe-4S] cluster: C353, C414, and C417.

It belongs to the aconitase/IPM isomerase family. LeuC type 1 subfamily. In terms of assembly, heterodimer of LeuC and LeuD. [4Fe-4S] cluster serves as cofactor.

It catalyses the reaction (2R,3S)-3-isopropylmalate = (2S)-2-isopropylmalate. Its pathway is amino-acid biosynthesis; L-leucine biosynthesis; L-leucine from 3-methyl-2-oxobutanoate: step 2/4. Functionally, catalyzes the isomerization between 2-isopropylmalate and 3-isopropylmalate, via the formation of 2-isopropylmaleate. The sequence is that of 3-isopropylmalate dehydratase large subunit from Xylella fastidiosa (strain M12).